We begin with the raw amino-acid sequence, 360 residues long: Peptide chain release factor 1 (360 aa).

The residue at position 235 (Q235) is an N5-methylglutamine. The span at 281–307 (ERQRADSERSADRRSQVGSGDRSERIR) shows a compositional bias: basic and acidic residues. The interval 281–311 (ERQRADSERSADRRSQVGSGDRSERIRTYNF) is disordered.

The protein belongs to the prokaryotic/mitochondrial release factor family. Methylated by PrmC. Methylation increases the termination efficiency of RF1.

The protein localises to the cytoplasm. Functionally, peptide chain release factor 1 directs the termination of translation in response to the peptide chain termination codons UAG and UAA. The chain is Peptide chain release factor 1 from Rhizobium meliloti (strain 1021) (Ensifer meliloti).